A 434-amino-acid polypeptide reads, in one-letter code: Mitochondrial distribution and morphology protein 12 (434 aa).

An SMP-LTD domain is found at 1–434 (MSIDIDWERA…VYPSFWTFLV (434 aa)). Residues 70–83 (YEEDDNENFSESSE) are compositionally biased toward acidic residues. Disordered stretches follow at residues 70-141 (YEED…LRSP) and 181-275 (TPLG…DDLP). Over residues 86-97 (SPTREPVDRYGS) the composition is skewed to basic and acidic residues. Positions 215-237 (SAQSRPSTANTGNTLLSRGSMSS) are enriched in polar residues.

The protein belongs to the MDM12 family. As to quaternary structure, component of the ER-mitochondria encounter structure (ERMES) or MDM complex, composed of MMM1, MDM10, MDM12 and MDM34. An MMM1 homodimer associates with one molecule of MDM12 on each side in a pairwise head-to-tail manner, and the SMP-LTD domains of MMM1 and MDM12 generate a continuous hydrophobic tunnel for phospholipid trafficking.

It is found in the mitochondrion outer membrane. The protein resides in the endoplasmic reticulum membrane. Functionally, component of the ERMES/MDM complex, which serves as a molecular tether to connect the endoplasmic reticulum (ER) and mitochondria. Components of this complex are involved in the control of mitochondrial shape and protein biogenesis, and function in nonvesicular lipid trafficking between the ER and mitochondria. MDM12 is required for the interaction of the ER-resident membrane protein MMM1 and the outer mitochondrial membrane-resident beta-barrel protein MDM10. The MDM12-MMM1 subcomplex functions in the major beta-barrel assembly pathway that is responsible for biogenesis of all mitochondrial outer membrane beta-barrel proteins, and acts in a late step after the SAM complex. The MDM10-MDM12-MMM1 subcomplex further acts in the TOM40-specific pathway after the action of the MDM12-MMM1 complex. Essential for establishing and maintaining the structure of mitochondria and maintenance of mtDNA nucleoids. In Blastomyces gilchristii (strain SLH14081) (Blastomyces dermatitidis), this protein is Mitochondrial distribution and morphology protein 12.